The chain runs to 829 residues: 1,4-alpha-glucan branching enzyme GlgB (829 aa).

Catalysis depends on Asp405, which acts as the Nucleophile. Glu458 functions as the Proton donor in the catalytic mechanism. The segment at 758–829 (ASKATKVSTK…TTAKKTKDNA (72 aa)) is disordered. Composition is skewed to low complexity over residues 778 to 789 (VKAATKSSVTKV) and 810 to 820 (VTKTAKASAKT).

The protein belongs to the glycosyl hydrolase 13 family. GlgB subfamily. In terms of assembly, monomer.

It catalyses the reaction Transfers a segment of a (1-&gt;4)-alpha-D-glucan chain to a primary hydroxy group in a similar glucan chain.. Its pathway is glycan biosynthesis; glycogen biosynthesis. Catalyzes the formation of the alpha-1,6-glucosidic linkages in glycogen by scission of a 1,4-alpha-linked oligosaccharide from growing alpha-1,4-glucan chains and the subsequent attachment of the oligosaccharide to the alpha-1,6 position. This is 1,4-alpha-glucan branching enzyme GlgB from Actinobacillus succinogenes (strain ATCC 55618 / DSM 22257 / CCUG 43843 / 130Z).